Here is a 96-residue protein sequence, read N- to C-terminus: RNA-binding protein Hfq (96 aa).

The region spanning 9 to 68 (DPFLNALRRERVPVSIYLVNGIKLQGQIESFDQFVILLKNTVSQMVYKHAISTVVPSRPV) is the Sm domain. The segment at 64–96 (PSRPVSHHSNTGTNQAGTNYSGGNATQQDDVAE) is disordered. Residues 70-96 (HHSNTGTNQAGTNYSGGNATQQDDVAE) are compositionally biased toward polar residues.

The protein belongs to the Hfq family. As to quaternary structure, homohexamer.

Its function is as follows. RNA chaperone that binds small regulatory RNA (sRNAs) and mRNAs to facilitate mRNA translational regulation in response to envelope stress, environmental stress and changes in metabolite concentrations. Also binds with high specificity to tRNAs. The sequence is that of RNA-binding protein Hfq from Proteus mirabilis (strain HI4320).